The following is a 281-amino-acid chain: Transmembrane protein 41A-A (281 aa).

A signal peptide spans 1–22 (MRSLVGLVAVIVTATFYLYSLS). The disordered stretch occupies residues 32–56 (HKQSHEGETTDAKDGDEPSEMETAS). Positions 34-47 (QSHEGETTDAKDGD) are enriched in basic and acidic residues. Transmembrane regions (helical) follow at residues 84–104 (GYVLLLFCSAYLYKQAFAIPG), 107–127 (FLNILAGALFGTWFGLLLTCV), 170–190 (LFFFLLFLRFFPMSPNWFLNM), 197–217 (IPVTLFFMAVFIGLMPYNFIC), and 236–256 (WSVVLKLLLTACVALLPGALI).

The protein belongs to the TMEM41 family.

The protein localises to the membrane. The chain is Transmembrane protein 41A-A (tmem41aa) from Danio rerio (Zebrafish).